Here is a 380-residue protein sequence, read N- to C-terminus: Endonuclease III homolog 2 (380 aa).

A Nuclear localization signal motif is present at residues 8–12 (RKRKH). An interaction with MLH1 region spans residues 15–40 (VDIEEVEVRSKYFKKNERTVELVKEN). Residue Lys-194 forms a Glycyl lysine isopeptide (Lys-Gly) (interchain with G-Cter in SUMO) linkage. The HhH domain occupies 228-252 (FDSDIPYDIEGILSLPGVGPKMGYL). Lys-248 acts as the Nucleophile; for N-glycosylase activity in catalysis. [4Fe-4S] cluster contacts are provided by Cys-319, Cys-326, Cys-329, and Cys-335. The Nuclear localization signal signature appears at 376–380 (RHKKK).

This sequence belongs to the Nth/MutY family. Interacts with MLH1. The cofactor is [4Fe-4S] cluster. Post-translationally, monosumoylated.

The protein resides in the nucleus. It carries out the reaction 2'-deoxyribonucleotide-(2'-deoxyribose 5'-phosphate)-2'-deoxyribonucleotide-DNA = a 3'-end 2'-deoxyribonucleotide-(2,3-dehydro-2,3-deoxyribose 5'-phosphate)-DNA + a 5'-end 5'-phospho-2'-deoxyribonucleoside-DNA + H(+). In terms of biological role, bifunctional DNA N-glycosylase with associated apurinic/apyrimidinic (AP) lyase function that catalyzes the first step in base excision repair (BER), the primary repair pathway for the repair of oxidative DNA damage. The DNA N-glycosylase activity releases the damaged DNA base from DNA by cleaving the N-glycosidic bond, leaving an AP site. The AP-lyase activity cleaves the phosphodiester bond 3' to the AP site by a beta-elimination. Primarily recognizes and repairs oxidative base damage of pyrimidines, but also purine-derived lesions, alkylation damage as well as abasic sites. Can also repair the oxidation products of 8-oxoguanine. This chain is Endonuclease III homolog 2 (NTG2), found in Saccharomyces cerevisiae (strain ATCC 204508 / S288c) (Baker's yeast).